Here is a 266-residue protein sequence, read N- to C-terminus: 3-methyl-2-oxobutanoate hydroxymethyltransferase (266 aa).

Mg(2+) contacts are provided by Asp-47 and Asp-86. 3-methyl-2-oxobutanoate-binding positions include 47-48 (DS), Asp-86, and Lys-114. Glu-116 contacts Mg(2+). Catalysis depends on Glu-183, which acts as the Proton acceptor.

It belongs to the PanB family. As to quaternary structure, homodecamer; pentamer of dimers. The cofactor is Mg(2+).

The protein localises to the cytoplasm. The catalysed reaction is 3-methyl-2-oxobutanoate + (6R)-5,10-methylene-5,6,7,8-tetrahydrofolate + H2O = 2-dehydropantoate + (6S)-5,6,7,8-tetrahydrofolate. Its pathway is cofactor biosynthesis; (R)-pantothenate biosynthesis; (R)-pantoate from 3-methyl-2-oxobutanoate: step 1/2. In terms of biological role, catalyzes the reversible reaction in which hydroxymethyl group from 5,10-methylenetetrahydrofolate is transferred onto alpha-ketoisovalerate to form ketopantoate. The chain is 3-methyl-2-oxobutanoate hydroxymethyltransferase from Idiomarina loihiensis (strain ATCC BAA-735 / DSM 15497 / L2-TR).